Reading from the N-terminus, the 83-residue chain is Hainantoxin-III 11 (83 aa).

The N-terminal stretch at 1 to 21 (MKASMFLALAGLVLLFVVGYA) is a signal peptide. Residues 22–48 (SESEEKDFPRELLSKIFAVDDFKGEER) constitute a propeptide that is removed on maturation. 3 disulfide bridges follow: Cys-50–Cys-65, Cys-57–Cys-70, and Cys-64–Cys-77. Leu-81 carries the post-translational modification Leucine amide.

It belongs to the neurotoxin 10 (Hwtx-1) family. 15 (Hntx-3) subfamily. Monomer. As to expression, expressed by the venom gland.

The protein resides in the secreted. Functionally, selective antagonist of neuronal tetrodotoxin (TTX)-sensitive voltage-gated sodium channels (IC(50)=1270 nM on Nav1.1/SCN1A, 270 nM on Nav1.2/SCN2A, 491 nM on Nav1.3/SCN3A and 232 nM on Nav1.7/SCN9A). This toxin suppress Nav1.7 current amplitude without significantly altering the activation, inactivation, and repriming kinetics. Short extreme depolarizations partially activate the toxin-bound channel, indicating voltage-dependent inhibition of this toxin. This toxin increases the deactivation of the Nav1.7 current after extreme depolarizations. The toxin-Nav1.7 complex is gradually dissociated upon prolonged strong depolarizations in a voltage-dependent manner, and the unbound toxin rebinds to Nav1.7 after a long repolarization. Moreover, analysis of chimeric channels showed that the DIIS3-S4 linker is critical for toxin binding to Nav1.7. These data are consistent with this toxin interacting with Nav1.7 site 4 and trapping the domain II voltage sensor in the closed state. This chain is Hainantoxin-III 11, found in Cyriopagopus hainanus (Chinese bird spider).